The primary structure comprises 692 residues: Elongation factor G (692 aa).

The tr-type G domain occupies 8–282; that stretch reads EKTRNIGIMA…AIVDFLPAPT (275 aa). GTP-binding positions include 17 to 24, 81 to 85, and 135 to 138; these read AHIDAGKT, DTPGH, and NKMD.

This sequence belongs to the TRAFAC class translation factor GTPase superfamily. Classic translation factor GTPase family. EF-G/EF-2 subfamily.

It is found in the cytoplasm. Functionally, catalyzes the GTP-dependent ribosomal translocation step during translation elongation. During this step, the ribosome changes from the pre-translocational (PRE) to the post-translocational (POST) state as the newly formed A-site-bound peptidyl-tRNA and P-site-bound deacylated tRNA move to the P and E sites, respectively. Catalyzes the coordinated movement of the two tRNA molecules, the mRNA and conformational changes in the ribosome. The protein is Elongation factor G of Moorella thermoacetica (strain ATCC 39073 / JCM 9320).